We begin with the raw amino-acid sequence, 1792 residues long: D-lysergyl-peptide-synthetase subunit 3 (1792 aa).

The interval 239–642 is adenylation (A) domain; it reads FRQRCDLHPN…GRKDSQIKIR (404 aa). The region spanning 779-853 is the Carrier domain; that stretch reads SNEEHRLQRM…DLARKASQSV (75 aa). O-(pantetheine 4'-phosphoryl)serine is present on serine 813. Residues 895-1285 are condensation (C) domain; sequence EDIYPCTPMQ…HILGQIHGKE (391 aa). Residues 1415–1640 are reductase (R) domain; the sequence is VTGANGFIGT…AGEFNSSAGS (226 aa).

The protein belongs to the NRP synthetase family.

It functions in the pathway alkaloid biosynthesis; ergot alkaloid biosynthesis. Its function is as follows. D-lysergyl-peptide-synthetase subunit 3; part of the gene cluster that mediates the biosynthesis of fungal ergot alkaloid. DmaW catalyzes the first step of ergot alkaloid biosynthesis by condensing dimethylallyl diphosphate (DMAP) and tryptophan to form 4-dimethylallyl-L-tryptophan. The second step is catalyzed by the methyltransferase easF that methylates 4-dimethylallyl-L-tryptophan in the presence of S-adenosyl-L-methionine, resulting in the formation of 4-dimethylallyl-L-abrine. The catalase easC and the FAD-dependent oxidoreductase easE then transform 4-dimethylallyl-L-abrine to chanoclavine-I which is further oxidized by easD in the presence of NAD(+), resulting in the formation of chanoclavine-I aldehyde. Agroclavine dehydrogenase easG then mediates the conversion of chanoclavine-I aldehyde to agroclavine via a non-enzymatic adduct reaction: the substrate is an iminium intermediate that is formed spontaneously from chanoclavine-I aldehyde in the presence of glutathione. The presence of easA is not required to complete this reaction. Further conversion of agroclavine to paspalic acid is a two-step process involving oxidation of agroclavine to elymoclavine and of elymoclavine to paspalic acid, the second step being performed by the elymoclavine oxidase cloA. Paspalic acid is then further converted to D-lysergic acid. Ergopeptines are assembled from D-lysergic acid and three different amino acids by the D-lysergyl-peptide-synthetases composed each of a monomudular and a trimodular nonribosomal peptide synthetase subunit. LpsB and lpsC encode the monomodular subunits responsible for D-lysergic acid activation and incorporation into the ergopeptine backbone. LpsA1 and A2 subunits encode the trimodular nonribosomal peptide synthetase assembling the tripeptide portion of ergopeptines. LpsA1 is responsible for formation of the major ergopeptine, ergotamine, and lpsA2 for alpha-ergocryptine, the minor ergopeptine of the total alkaloid mixture elaborated by C.purpurea. D-lysergyl-tripeptides are assembled by the nonribosomal peptide synthetases and released as N-(D-lysergyl-aminoacyl)-lactams. Cyclolization of the D-lysergyl-tripeptides is performed by the Fe(2+)/2-ketoglutarate-dependent dioxygenase easH which introduces a hydroxyl group into N-(D-lysergyl-aminoacyl)-lactam at alpha-C of the aminoacyl residue followed by spontaneous condensation with the terminal lactam carbonyl group. This Claviceps purpurea (strain 20.1) (Ergot fungus) protein is D-lysergyl-peptide-synthetase subunit 3.